Reading from the N-terminus, the 429-residue chain is MEFTESERLQSLSDEYILGGVNSPSRSYKAVGGGAPVVMKEGKGQYLYDVDGNRYIDYLQAYGPIITGHAHPHITKAIQEQAAKGVLYGTPTELEIKFAKKLREAIPSLKKMRFVNSGTEAVMTTIRVARAYTNRNKIIKFAGSYHGHSDLVLVAAGSGPSQLGSPDSAGVPKSVAQEVITVPFNDIEAYKEAMKHWGNEVAAVLVEPIVGNFGMVEPKPGFLEAVNEITHEYGGLVVYDEVITAFRFHYGAAQDLLNVYPDLTAFGKIVGGGLPIGGYGGRQDIMEQVAPLGPAYQAGTMAGNPLSMKAGIALLEVLEQDGVYEELDRLGKKLEDGLNELIDKHDITATINRVYGSLTLYFTDEKVTHYDQAENADGDAFAKFFKLMLNQGINLAPSKFEAWFLTTEHTDEDIEETLRAADYAFSQMK.

At K268 the chain carries N6-(pyridoxal phosphate)lysine.

This sequence belongs to the class-III pyridoxal-phosphate-dependent aminotransferase family. HemL subfamily. In terms of assembly, homodimer. Pyridoxal 5'-phosphate serves as cofactor.

It localises to the cytoplasm. The catalysed reaction is (S)-4-amino-5-oxopentanoate = 5-aminolevulinate. Its pathway is porphyrin-containing compound metabolism; protoporphyrin-IX biosynthesis; 5-aminolevulinate from L-glutamyl-tRNA(Glu): step 2/2. In Staphylococcus carnosus (strain TM300), this protein is Glutamate-1-semialdehyde 2,1-aminomutase 2.